The primary structure comprises 409 residues: Testis-expressed protein 13A (409 aa).

A required for repression of transcription region spans residues W92–P408. The tract at residues G347 to Y374 is disordered. A compositionally biased stretch (basic and acidic residues) spans G348 to Q368. The RanBP2-type zinc finger occupies R376–G400. Zn(2+) contacts are provided by C382, C385, C396, and C399.

It belongs to the TEX13 family. Interacts with CNOT1; the interaction may inhibit CNOT1 binding to mRNA and subsequently CNOT1-mediated mRNA degradation. Testis specific.

Functionally, binds to ssRNA containing the consensus sequence 5'-AGGUAA-3'. Plays a role in transcriptional repression. Required for rapid sperm motility and timely degradation of mRNA via its interaction with CNOT1. The chain is Testis-expressed protein 13A from Homo sapiens (Human).